Reading from the N-terminus, the 286-residue chain is Hypersensitive-induced response protein 1 (286 aa).

G2 is lipidated: N-myristoyl glycine. Residues 114–190 (LDDVFEQKND…EKILQIKRAE (77 aa)) are a coiled coil.

As to quaternary structure, self-interacts and forms heteromers. Interacts with NB-LRR class of R proteins before R proteins (e.g. RPS2 or RPM1) are activated by the effectors. Interacts with LRR1.

The protein localises to the cell membrane. Functionally, positive regulator of hypersensitive response (HR)-like cell death. May be involved in potassium ion channel regulation. The sequence is that of Hypersensitive-induced response protein 1 from Arabidopsis thaliana (Mouse-ear cress).